The sequence spans 115 residues: Large ribosomal subunit protein uL18 (115 aa).

The protein belongs to the universal ribosomal protein uL18 family. In terms of assembly, part of the 50S ribosomal subunit; part of the 5S rRNA/L5/L18/L25 subcomplex. Contacts the 5S and 23S rRNAs.

Its function is as follows. This is one of the proteins that bind and probably mediate the attachment of the 5S RNA into the large ribosomal subunit, where it forms part of the central protuberance. In Rickettsia rickettsii (strain Iowa), this protein is Large ribosomal subunit protein uL18.